The primary structure comprises 127 residues: uncharacterized protein (127 aa).

Residues 71-126 (FYLREYRRIRRRIKELKNRAKYISKGEIAYNPKIMKEVEALKEKLSEIEKKIEELK) are a coiled coil.

This is an uncharacterized protein from Aquifex aeolicus (strain VF5).